The primary structure comprises 455 residues: Argininosuccinate lyase (455 aa).

Belongs to the lyase 1 family. Argininosuccinate lyase subfamily.

It is found in the cytoplasm. The enzyme catalyses 2-(N(omega)-L-arginino)succinate = fumarate + L-arginine. The protein operates within amino-acid biosynthesis; L-arginine biosynthesis; L-arginine from L-ornithine and carbamoyl phosphate: step 3/3. The sequence is that of Argininosuccinate lyase from Shewanella sp. (strain MR-4).